The sequence spans 635 residues: Sulfite reductase [ferredoxin], chloroplastic (635 aa).

The N-terminal 50 residues, 1-50 (MSGAIGGAEVHGFRGAAAQLPRSRVLGRPIRVAPPAAARPGGASAGSIRA), are a transit peptide targeting the chloroplast. Disordered stretches follow at residues 31–50 (RVAP…SIRA) and 245–267 (PEVT…PEPI). Over residues 245-254 (PEVTKARNDN) the composition is skewed to basic and acidic residues. Cysteine 494, cysteine 500, cysteine 540, and cysteine 544 together coordinate [4Fe-4S] cluster. A siroheme-binding site is contributed by cysteine 544.

This sequence belongs to the nitrite and sulfite reductase 4Fe-4S domain family. As to quaternary structure, monomer. Interacts with ferredoxin. Requires siroheme as cofactor. The cofactor is [4Fe-4S] cluster. Phosphorylated; this phosphorylation reduces DNA-binding. Present in roots and leaves (at protein level). In leaves, sulfite reductase activity is detected in both bundle sheath and mesophyll cell types.

It localises to the plastid. The protein resides in the chloroplast stroma. The protein localises to the chloroplast nucleoid. Its subcellular location is the plastid stroma. It catalyses the reaction hydrogen sulfide + 6 oxidized [2Fe-2S]-[ferredoxin] + 3 H2O = sulfite + 6 reduced [2Fe-2S]-[ferredoxin] + 7 H(+). Its activity is regulated as follows. Inhibited by the tryptophan-modifying reagent, N-bromosuccinimide (NBS), by the lysine-modifying reagent, N-acetylsuccinimide and by the arginine-modifying reagent, phenylglyoxal. Complex formation with ferredoxin prevents these inhibitions. Its function is as follows. Essential protein with sulfite reductase activity required in assimilatory sulfate reduction pathway during both primary and secondary metabolism and thus involved in development and growth. DNA-binding protein that binds to both double-stranded and single-stranded DNA without significant sequence specificity to reversibly repress the transcriptional activity of chloroplast nucleoids by promoting DNA compaction and possibly regulate DNA replication. The protein is Sulfite reductase [ferredoxin], chloroplastic (SIR) of Zea mays (Maize).